The sequence spans 121 residues: U15-barytoxin-Tl1b (121 aa).

Positions 1-16 are cleaved as a signal peptide; sequence MKLFMVLVASFAFAVA. Disulfide bonds link cysteine 54–cysteine 72, cysteine 65–cysteine 78, cysteine 69–cysteine 119, and cysteine 71–cysteine 90.

It belongs to the neurotoxin 03 (Tx2) family. 03 subfamily. In terms of tissue distribution, expressed by the venom gland.

The protein resides in the secreted. Ion channel inhibitor. The chain is U15-barytoxin-Tl1b from Trittame loki (Brush-footed trapdoor spider).